We begin with the raw amino-acid sequence, 478 residues long: MTRIKINARRIFSLLIPFFFFTSVHAEQTAAPAKPVTVEAKNETFAPQHPDQYLSWKATSEQSERVDALAEDPRLVILWAGYPFSHDYNKPRGHAFAVTDVRETLRTGAPKNAEDGPLPMACWSCKSPDVARLIQKDGEDGYFHGKWARGGPEIVNNLGCADCHNTASPEFAKGKPELTLSRPYAARAMEAIGKPFEKAGRFDQQSMVCGQCHVEYYFDGKNKAVKFPWDDGMKVENMEQYYDKIAFSDWTNSLSKTPMLKAQHPEYETWTAGIHGKNNVTCIDCHMPKVQNAEGKLYTDHKIGNPFDNFAQTCANCHTQDKAALQKVVAERKQSINDLKIKVEDQLVHAHFEAKAALDAGATEAEMKPIQDDIRHAQWRWDLAIASHGIHMHAPEEGLRMLGTAMDKAADARTKLARLLATKGITHEIQIPDISTKEKAQQAIGLNMEQIKAEKQDFIKTVIPQWEEQARKNGLLSQ.

An N-terminal signal peptide occupies residues 1–26 (MTRIKINARRIFSLLIPFFFFTSVHA). Residue H94 coordinates heme c. Heme contacts are provided by C122, C125, and K126. Positions 160, 163, 164, 209, 212, and 213 each coordinate heme c. E215, Y216, K261, and Q263 together coordinate Ca(2+). Y216 contacts substrate. Residue H264 coordinates substrate. 9 residues coordinate heme c: H275, C282, C285, H286, H301, C314, C317, H318, and H393.

Belongs to the cytochrome c-552 family. Ca(2+) serves as cofactor. It depends on heme c as a cofactor.

It localises to the periplasm. The catalysed reaction is 6 Fe(III)-[cytochrome c] + NH4(+) + 2 H2O = 6 Fe(II)-[cytochrome c] + nitrite + 8 H(+). The protein operates within nitrogen metabolism; nitrate reduction (assimilation). Its function is as follows. Catalyzes the reduction of nitrite to ammonia, consuming six electrons in the process. The chain is Cytochrome c-552 from Escherichia coli O157:H7 (strain EC4115 / EHEC).